Here is a 406-residue protein sequence, read N- to C-terminus: MRATDRMGARAVSKLRLALLFVLVLGTPRSGVQGEDGLDFPEYDGVDRVINVNAKNYKNVFKKYEVLALLYHEPPEDDKASQRQFEMEELILELAAQVLEDKGVGFGLVDSEKDAAVAKKLGLTEEDSVYVFKGDEVIEYDGEFSADTLVEFLLDVLEDPVELIEGERELQAFENIEDEIKLIGYFKSKDSEHYKAYEDAAEEFHPYIPFFATFDSKVAKKLTLKLNEIDFYEAFMEEPVTIPDKPNSEEEIVSFVEEHRRSTLRKLKPESMYETWEDDLDGIHIVAFAEEADPDGYEFLETLKAVAQDNTENPDLSIIWIDPDDFPLLVPYWEKTFDIDLSAPQIGVVNVTDADSIWMEMDDEEDLPSAEELEDWLEDVLEGEINTEDDDDDDDDDDDDDDDDDD.

Positions 1-34 (MRATDRMGARAVSKLRLALLFVLVLGTPRSGVQG) are cleaved as a signal peptide. Tyr-43 is modified (phosphotyrosine). Ser-81 bears the Phosphoserine mark. A Phosphothreonine modification is found at Thr-124. Phosphoserine is present on Ser-216. An N-linked (GlcNAc...) asparagine glycan is attached at Asn-350. The disordered stretch occupies residues 382 to 406 (EGEINTEDDDDDDDDDDDDDDDDDD).

It belongs to the calsequestrin family. As to quaternary structure, monomer; increases in response to a depletion of intracellular calcium. Homodimer. Homotetramer and homopolymer. Can form linear homooligomers. Ca(2+) ions promote oligomerization. Interacts (via C-terminal end and preferentially with the monomeric form) with STIM1; this interaction increases in response to a depletion of intracellular calcium, decreases both STIM1 aggregation and clustering, interaction of STIM1 with ORAI1 and store-operated Ca(2+) entry (SOCE) activity. Interacts with ASPH and TRDN. N-glycosylated. As to expression, detected in skeletal muscle and in smooth muscle from vas deferens, aorta and stomach (at protein level).

The protein localises to the endoplasmic reticulum. Its subcellular location is the sarcoplasmic reticulum. It localises to the sarcoplasmic reticulum lumen. It is found in the sarcoplasmic reticulum membrane. The protein resides in the mitochondrion matrix. In terms of biological role, calsequestrin is a high-capacity, moderate affinity, calcium-binding protein and thus acts as an internal calcium store in muscle. Calcium ions are bound by clusters of acidic residues at the protein surface, often at the interface between subunits. Can bind around 80 Ca(2+) ions. Regulates the release of lumenal Ca(2+) via the calcium release channel RYR1; this plays an important role in triggering muscle contraction. Negatively regulates store-operated Ca(2+) entry (SOCE) activity. The chain is Calsequestrin-1 (Casq1) from Rattus norvegicus (Rat).